The primary structure comprises 189 residues: MLVGYARVSTEGQSLNRQIDMLVDYGLDKRNIYQEKISGTKLRRDQLDKMIEELQEGDTVIITDLTRISRSTKDLLNIIDRIKEKGASIKSLKDTWLDTSGDNPYNSFLLTVMSGLSQLERDLISQRTKEGLRSAKARGRNGGRPSKRNDKADTVGLLYREGYKIVDIVKQTELSRATVYRILKDLNLK.

Residues 1–139 form the Resolvase/invertase-type recombinase catalytic domain; sequence MLVGYARVST…EGLRSAKARG (139 aa). The active-site O-(5'-phospho-DNA)-serine intermediate is serine 9. The segment at 130–151 is disordered; that stretch reads EGLRSAKARGRNGGRPSKRNDK. A DNA-binding region (H-T-H motif) is located at residues 165–184; the sequence is IVDIVKQTELSRATVYRILK.

This sequence belongs to the site-specific recombinase resolvase family.

In terms of biological role, a likely role for the res protein would be to stabilize pCP13 by reducing the number of plasmid multimers resulting from homologous recombination. This chain is Resolvase (res), found in Clostridium perfringens (strain 13 / Type A).